A 283-amino-acid polypeptide reads, in one-letter code: Orotidine 5'-phosphate decarboxylase (283 aa).

The Proton donor role is filled by lysine 97.

It belongs to the OMP decarboxylase family. Type 2 subfamily.

The catalysed reaction is orotidine 5'-phosphate + H(+) = UMP + CO2. It functions in the pathway pyrimidine metabolism; UMP biosynthesis via de novo pathway; UMP from orotate: step 2/2. The sequence is that of Orotidine 5'-phosphate decarboxylase from Clostridium botulinum (strain Kyoto / Type A2).